A 243-amino-acid polypeptide reads, in one-letter code: TIGR03089 family protein (243 aa).

Belongs to the TIGR03089 family.

This Mycobacterium tuberculosis (strain ATCC 25618 / H37Rv) protein is TIGR03089 family protein.